A 533-amino-acid chain; its full sequence is MHSRYRDGALLLAAFLLAYLLPLGFHGLWIPDETRYAQISQEMLHSGNWIAPHFMGLRYFEKPPAGYWLIALGQAVFGENLFGVRIASAISTGLSVLLAYLLAGKIWSDPRKSFASALLFMSFGFVAGQAGYSNLDPQFTLWTNLTLVAFWYAVHSIDRARLVAWTVVGVACGMGFMTKGFLAWALPAIITLPYMLWQRRLTELLRFGPLAVVIAIAVCLPWALAVHQQEPDYWRYFFWHEHIRRFAGDNAQHAQPWWFYLPLLIAACLPWALLLPVTFKQAWQRKSRPDTAFLLLWLVLPLAFLSLSKGKLPTYILPCLLPLALLMADALVEHLNQGRGRALRVNGIVNAALTFLGLLALIYVQLKQPVYENEPMHLLLAVIVLTGWTLTNALQGIRPLTFWALPAVGSWLLIVLLPAALPNDVVYNKTPDQFVARHQAELAACTHLLSNDLGAASALSWRLKRPDITLFNTWGELEYGLGYPDVQGRQVRLQGIDAWVTKARSEGRVGVIMRGKSDEELRELELLPKDGQR.

13 helical membrane-spanning segments follow: residues 10–30 (LLLA…GLWI), 64–84 (PAGY…LFGV), 86–106 (IASA…AGKI), 113–133 (SFAS…AGYS), 137–157 (PQFT…VHSI), 170–190 (VACG…PAII), 207–227 (FGPL…LAVH), 257–277 (WWFY…LLPV), 290–310 (DTAF…LSKG), 312–332 (LPTY…DALV), 345–365 (VNGI…IYVQ), 377–397 (HLLL…LQGI), and 402–422 (FWAL…AALP).

Belongs to the glycosyltransferase 83 family.

It is found in the cell inner membrane. It catalyses the reaction 4-amino-4-deoxy-alpha-L-arabinopyranosyl di-trans,octa-cis-undecaprenyl phosphate + lipid IVA = lipid IIA + di-trans,octa-cis-undecaprenyl phosphate.. It functions in the pathway lipopolysaccharide metabolism; 4-amino-4-deoxy-beta-L-arabinose-lipid A biosynthesis. In terms of biological role, catalyzes the transfer of the L-Ara4N moiety of the glycolipid undecaprenyl phosphate-alpha-L-Ara4N to lipid A. The modified arabinose is attached to lipid A and is required for resistance to polymyxin and cationic antimicrobial peptides. This chain is Undecaprenyl phosphate-alpha-4-amino-4-deoxy-L-arabinose arabinosyl transferase, found in Pseudomonas savastanoi pv. phaseolicola (strain 1448A / Race 6) (Pseudomonas syringae pv. phaseolicola (strain 1448A / Race 6)).